A 698-amino-acid chain; its full sequence is Elongation factor G 1 (698 aa).

The tr-type G domain maps to E8–I290. GTP is bound by residues A17–T24, D88–H92, and N142–D145.

It belongs to the TRAFAC class translation factor GTPase superfamily. Classic translation factor GTPase family. EF-G/EF-2 subfamily.

Its subcellular location is the cytoplasm. Functionally, catalyzes the GTP-dependent ribosomal translocation step during translation elongation. During this step, the ribosome changes from the pre-translocational (PRE) to the post-translocational (POST) state as the newly formed A-site-bound peptidyl-tRNA and P-site-bound deacylated tRNA move to the P and E sites, respectively. Catalyzes the coordinated movement of the two tRNA molecules, the mRNA and conformational changes in the ribosome. This Shewanella frigidimarina (strain NCIMB 400) protein is Elongation factor G 1.